The sequence spans 249 residues: Transcription initiation factor TFIID subunit 9B (249 aa).

An N-acetylmethionine modification is found at M1. Residue S147 is modified to Phosphoserine. Positions 148–171 (AVSSRPTTPPVAPPQAVSGPNKAA) are disordered. Residue T172 is modified to Phosphothreonine. S175 is subject to Phosphoserine. A compositionally biased stretch (polar residues) spans 224-234 (VSSQNTATDSN). The interval 224–249 (VSSQNTATDSNPLKRKHDDDDDNDTM) is disordered.

It belongs to the TAF9 family. In terms of assembly, binds TAF5 and TAF6. Component of TFIID and the TATA-binding protein-free TAF complex (TFTC). TFIID is composed of TATA binding protein (TBP) and a number of TBP-associated factors (TAFs). Binds N-terminal domain of p53/TP53 which is essential for transcription.

It is found in the nucleus. Essential for cell viability. TAF9 and TAF9B are involved in transcriptional activation as well as repression of distinct but overlapping sets of genes. May have a role in gene regulation associated with apoptosis. TAFs are components of the transcription factor IID (TFIID) complex, the TBP-free TAFII complex (TFTC), the PCAF histone acetylase complex and the STAGA transcription coactivator-HAT complex. TFIID or TFTC are essential for the regulation of RNA polymerase II-mediated transcription. In Mus musculus (Mouse), this protein is Transcription initiation factor TFIID subunit 9B (Taf9b).